Consider the following 359-residue polypeptide: Phospho-N-acetylmuramoyl-pentapeptide-transferase (359 aa).

Transmembrane regions (helical) follow at residues 3–23 (QILI…PVLI), 55–75 (VAIL…GLAF), 80–100 (IGAS…VGFI), 117–137 (TAKT…VLQF), 156–176 (IATV…IVSA), 187–207 (LDGL…LITF), 231–251 (LALI…WNAA), 255–275 (IFMG…LSVT), 280–300 (ILAV…VLQI), and 334–354 (FWLL…GEWL).

The protein belongs to the glycosyltransferase 4 family. MraY subfamily. Requires Mg(2+) as cofactor.

It is found in the cell membrane. It catalyses the reaction UDP-N-acetyl-alpha-D-muramoyl-L-alanyl-gamma-D-glutamyl-meso-2,6-diaminopimeloyl-D-alanyl-D-alanine + di-trans,octa-cis-undecaprenyl phosphate = di-trans,octa-cis-undecaprenyl diphospho-N-acetyl-alpha-D-muramoyl-L-alanyl-D-glutamyl-meso-2,6-diaminopimeloyl-D-alanyl-D-alanine + UMP. It functions in the pathway cell wall biogenesis; peptidoglycan biosynthesis. Functionally, catalyzes the initial step of the lipid cycle reactions in the biosynthesis of the cell wall peptidoglycan: transfers peptidoglycan precursor phospho-MurNAc-pentapeptide from UDP-MurNAc-pentapeptide onto the lipid carrier undecaprenyl phosphate, yielding undecaprenyl-pyrophosphoryl-MurNAc-pentapeptide, known as lipid I. The protein is Phospho-N-acetylmuramoyl-pentapeptide-transferase of Mycobacterium tuberculosis (strain ATCC 25177 / H37Ra).